A 270-amino-acid chain; its full sequence is Non-homologous end joining protein Ku (270 aa).

In terms of domain architecture, Ku spans 10–194 (SLGLLNIGIK…NYPIQKQELT (185 aa)).

This sequence belongs to the prokaryotic Ku family. In terms of assembly, homodimer. Interacts with LigD.

Functionally, with LigD forms a non-homologous end joining (NHEJ) DNA repair enzyme, which repairs dsDNA breaks with reduced fidelity. Binds linear dsDNA with 5'- and 3'- overhangs but not closed circular dsDNA nor ssDNA. Recruits and stimulates the ligase activity of LigD. The sequence is that of Non-homologous end joining protein Ku from Bacillus thuringiensis subsp. konkukian (strain 97-27).